Consider the following 247-residue polypeptide: Cytochrome c oxidase subunit 2 (247 aa).

Residues 1 to 11 (MFYLLNSIIMN) form the signal peptide. Topologically, residues 12–38 (DVPTPYGMYFQDSATPNQEGILELHDN) are mitochondrial intermembrane. Residues 39 to 59 (IMFYLFIILGLVSWLLFTIVR) form a helical membrane-spanning segment. At 60–78 (TYSKNPIAYKYIKHGQTIE) the chain is on the mitochondrial matrix side. Residues 79 to 101 (IIWTIFPAVILLIIAFPSFILLY) form a helical membrane-spanning segment. The Mitochondrial intermembrane portion of the chain corresponds to 102–247 (LCDEVISPAM…PAFLEWLNEQ (146 aa)). Cu cation contacts are provided by H182, C217, E219, C221, H225, and M228. E219 provides a ligand contact to Mg(2+).

Belongs to the cytochrome c oxidase subunit 2 family. Component of the cytochrome c oxidase (complex IV, CIV), a multisubunit enzyme composed of a catalytic core of 3 subunits and several supernumerary subunits. The complex exists as a monomer or a dimer and forms supercomplexes (SCs) in the inner mitochondrial membrane with ubiquinol-cytochrome c oxidoreductase (cytochrome b-c1 complex, complex III, CIII). Cu cation is required as a cofactor. In terms of processing, the signal sequence of COX2 is processed by IMP1.

The protein localises to the mitochondrion inner membrane. It carries out the reaction 4 Fe(II)-[cytochrome c] + O2 + 8 H(+)(in) = 4 Fe(III)-[cytochrome c] + 2 H2O + 4 H(+)(out). In terms of biological role, component of the cytochrome c oxidase, the last enzyme in the mitochondrial electron transport chain which drives oxidative phosphorylation. The respiratory chain contains 3 multisubunit complexes succinate dehydrogenase (complex II, CII), ubiquinol-cytochrome c oxidoreductase (cytochrome b-c1 complex, complex III, CIII) and cytochrome c oxidase (complex IV, CIV), that cooperate to transfer electrons derived from NADH and succinate to molecular oxygen, creating an electrochemical gradient over the inner membrane that drives transmembrane transport and the ATP synthase. Cytochrome c oxidase is the component of the respiratory chain that catalyzes the reduction of oxygen to water. Electrons originating from reduced cytochrome c in the intermembrane space (IMS) are transferred via the dinuclear copper A center (CU(A)) of subunit 2 and heme A of subunit 1 to the active site in subunit 1, a binuclear center (BNC) formed by heme A3 and copper B (CU(B)). The BNC reduces molecular oxygen to 2 water molecules using 4 electrons from cytochrome c in the IMS and 4 protons from the mitochondrial matrix. This chain is Cytochrome c oxidase subunit 2 (COX2), found in Kluyveromyces lactis (strain ATCC 8585 / CBS 2359 / DSM 70799 / NBRC 1267 / NRRL Y-1140 / WM37) (Yeast).